The sequence spans 77 residues: Defensin-like protein (77 aa).

The signal sequence occupies residues M1–A30. 4 disulfide bridges follow: C33/C77, C44/C64, C50/C71, and C54/C73.

This sequence belongs to the DEFL family.

Its subcellular location is the secreted. In Nelumbo nucifera (Sacred lotus), this protein is Defensin-like protein.